A 400-amino-acid chain; its full sequence is Acetate kinase (400 aa).

Asparagine 10 is a binding site for Mg(2+). Lysine 17 is an ATP binding site. Arginine 91 is a substrate binding site. Aspartate 150 acts as the Proton donor/acceptor in catalysis. ATP is bound by residues 210–214, 285–287, and 333–337; these read HLGNG, DCR, and GIGEN. Glutamate 387 is a Mg(2+) binding site.

This sequence belongs to the acetokinase family. Homodimer. Mg(2+) is required as a cofactor. It depends on Mn(2+) as a cofactor.

The protein resides in the cytoplasm. The enzyme catalyses acetate + ATP = acetyl phosphate + ADP. The protein operates within metabolic intermediate biosynthesis; acetyl-CoA biosynthesis; acetyl-CoA from acetate: step 1/2. Functionally, catalyzes the formation of acetyl phosphate from acetate and ATP. Can also catalyze the reverse reaction. This is Acetate kinase from Pectobacterium carotovorum subsp. carotovorum (strain PC1).